The sequence spans 70 residues: ATP synthase subunit c (70 aa).

2 consecutive transmembrane segments (helical) span residues 4–24 and 47–67; these read IASA…NGLI and FVGV…AFMV.

It belongs to the ATPase C chain family. In terms of assembly, F-type ATPases have 2 components, F(1) - the catalytic core - and F(0) - the membrane proton channel. F(1) has five subunits: alpha(3), beta(3), gamma(1), delta(1), epsilon(1). F(0) has three main subunits: a(1), b(2) and c(10-14). The alpha and beta chains form an alternating ring which encloses part of the gamma chain. F(1) is attached to F(0) by a central stalk formed by the gamma and epsilon chains, while a peripheral stalk is formed by the delta and b chains.

Its subcellular location is the cell membrane. Its function is as follows. F(1)F(0) ATP synthase produces ATP from ADP in the presence of a proton or sodium gradient. F-type ATPases consist of two structural domains, F(1) containing the extramembraneous catalytic core and F(0) containing the membrane proton channel, linked together by a central stalk and a peripheral stalk. During catalysis, ATP synthesis in the catalytic domain of F(1) is coupled via a rotary mechanism of the central stalk subunits to proton translocation. In terms of biological role, key component of the F(0) channel; it plays a direct role in translocation across the membrane. A homomeric c-ring of between 10-14 subunits forms the central stalk rotor element with the F(1) delta and epsilon subunits. This chain is ATP synthase subunit c, found in Priestia megaterium (strain ATCC 12872 / QMB1551) (Bacillus megaterium).